The chain runs to 588 residues: DNA mismatch repair protein MutL (588 aa).

This sequence belongs to the DNA mismatch repair MutL/HexB family.

This protein is involved in the repair of mismatches in DNA. It is required for dam-dependent methyl-directed DNA mismatch repair. May act as a 'molecular matchmaker', a protein that promotes the formation of a stable complex between two or more DNA-binding proteins in an ATP-dependent manner without itself being part of a final effector complex. This is DNA mismatch repair protein MutL from Methanocorpusculum labreanum (strain ATCC 43576 / DSM 4855 / Z).